Reading from the N-terminus, the 134-residue chain is Small ribosomal subunit protein bS6 (134 aa).

The disordered stretch occupies residues Ala103 to Gly134. Over residues Ala118–Gly134 the composition is skewed to low complexity.

The protein belongs to the bacterial ribosomal protein bS6 family.

Functionally, binds together with bS18 to 16S ribosomal RNA. In Citrifermentans bemidjiense (strain ATCC BAA-1014 / DSM 16622 / JCM 12645 / Bem) (Geobacter bemidjiensis), this protein is Small ribosomal subunit protein bS6.